Reading from the N-terminus, the 437-residue chain is Trigger factor (437 aa).

The PPIase FKBP-type domain occupies 164-249; the sequence is GDFAKFDFEG…LHEIQCKKIG (86 aa).

This sequence belongs to the FKBP-type PPIase family. Tig subfamily.

The protein localises to the cytoplasm. It carries out the reaction [protein]-peptidylproline (omega=180) = [protein]-peptidylproline (omega=0). Functionally, involved in protein export. Acts as a chaperone by maintaining the newly synthesized protein in an open conformation. Functions as a peptidyl-prolyl cis-trans isomerase. The sequence is that of Trigger factor from Campylobacter hominis (strain ATCC BAA-381 / DSM 21671 / CCUG 45161 / LMG 19568 / NCTC 13146 / CH001A).